We begin with the raw amino-acid sequence, 421 residues long: Enolase (421 aa).

Q165 contacts (2R)-2-phosphoglycerate. The active-site Proton donor is the E207. Residues D244, E285, and D312 each coordinate Mg(2+). Positions 337, 366, 367, and 388 each coordinate (2R)-2-phosphoglycerate. K337 serves as the catalytic Proton acceptor.

Belongs to the enolase family. The cofactor is Mg(2+).

It is found in the cytoplasm. The protein localises to the secreted. The protein resides in the cell surface. It carries out the reaction (2R)-2-phosphoglycerate = phosphoenolpyruvate + H2O. The protein operates within carbohydrate degradation; glycolysis; pyruvate from D-glyceraldehyde 3-phosphate: step 4/5. Functionally, catalyzes the reversible conversion of 2-phosphoglycerate (2-PG) into phosphoenolpyruvate (PEP). It is essential for the degradation of carbohydrates via glycolysis. This chain is Enolase, found in Ehrlichia ruminantium (strain Welgevonden).